The following is a 326-amino-acid chain: MKSEEKIKLVSIVGPTASGKTELAVRLAERFDGEIVNADSMQVYRGMDIGTAKPSVSLRSRVTHHLIDIVTPDVNFSASDFRRAADGAIADIHSRGKRVFIVGGTGLYIRALLQGLVDSPSGDEQIRGELNELAKEIGNEGLLQLLAEVDPITAERLHHNDRVRIIRALEVYRQTGRPMSQFRQEHGFAEEMYDCLMLGINVERQELYSRVEKRVDEMVESGLAAEVEELFRLGYARDLKAMRSIGYKEICSFLSGEISLDQAVQLIKRDTRRYAKRQMTWFNKEYGIKWVEYPAAFANICNHVIEFFERGEDHAKSTFQHPGSVP.

14–21 (GPTASGKT) lines the ATP pocket. Residue 16–21 (TASGKT) coordinates substrate. Residues 39-42 (DSMQ) are interaction with substrate tRNA.

The protein belongs to the IPP transferase family. As to quaternary structure, monomer. It depends on Mg(2+) as a cofactor.

The enzyme catalyses adenosine(37) in tRNA + dimethylallyl diphosphate = N(6)-dimethylallyladenosine(37) in tRNA + diphosphate. Its function is as follows. Catalyzes the transfer of a dimethylallyl group onto the adenine at position 37 in tRNAs that read codons beginning with uridine, leading to the formation of N6-(dimethylallyl)adenosine (i(6)A). The sequence is that of tRNA dimethylallyltransferase 2 from Geotalea daltonii (strain DSM 22248 / JCM 15807 / FRC-32) (Geobacter daltonii).